Consider the following 246-residue polypeptide: 1-(5-phosphoribosyl)-5-[(5-phosphoribosylamino)methylideneamino] imidazole-4-carboxamide isomerase (246 aa).

D8 (proton acceptor) is an active-site residue. D131 serves as the catalytic Proton donor.

This sequence belongs to the HisA/HisF family.

Its subcellular location is the cytoplasm. The catalysed reaction is 1-(5-phospho-beta-D-ribosyl)-5-[(5-phospho-beta-D-ribosylamino)methylideneamino]imidazole-4-carboxamide = 5-[(5-phospho-1-deoxy-D-ribulos-1-ylimino)methylamino]-1-(5-phospho-beta-D-ribosyl)imidazole-4-carboxamide. The protein operates within amino-acid biosynthesis; L-histidine biosynthesis; L-histidine from 5-phospho-alpha-D-ribose 1-diphosphate: step 4/9. The chain is 1-(5-phosphoribosyl)-5-[(5-phosphoribosylamino)methylideneamino] imidazole-4-carboxamide isomerase from Bordetella petrii (strain ATCC BAA-461 / DSM 12804 / CCUG 43448).